The following is a 520-amino-acid chain: 3-phosphoshikimate 1-carboxyvinyltransferase, chloroplastic (520 aa).

The transit peptide at 1–76 (MAQVSRICNG…KVMSSVSTAE (76 aa)) directs the protein to the chloroplast. The disordered stretch occupies residues 20–39 (LSKSSQRKSPLSVSLKTQQH). Residues lysine 99, serine 100, and arginine 104 each coordinate 3-phosphoshikimate. Lysine 99 contributes to the phosphoenolpyruvate binding site. The phosphoenolpyruvate site is built by glycine 177 and arginine 207. 6 residues coordinate 3-phosphoshikimate: serine 254, serine 255, glutamine 256, serine 282, aspartate 407, and lysine 434. Glutamine 256 is a binding site for phosphoenolpyruvate. Aspartate 407 functions as the Proton acceptor in the catalytic mechanism. 3 residues coordinate phosphoenolpyruvate: arginine 438, arginine 480, and lysine 505.

The protein belongs to the EPSP synthase family.

The protein resides in the plastid. It localises to the chloroplast. The catalysed reaction is 3-phosphoshikimate + phosphoenolpyruvate = 5-O-(1-carboxyvinyl)-3-phosphoshikimate + phosphate. Its pathway is metabolic intermediate biosynthesis; chorismate biosynthesis; chorismate from D-erythrose 4-phosphate and phosphoenolpyruvate: step 6/7. Catalyzes the transfer of the enolpyruvyl moiety of phosphoenolpyruvate (PEP) to the 5-hydroxyl of shikimate-3-phosphate (S3P) to produce enolpyruvyl shikimate-3-phosphate and inorganic phosphate. This chain is 3-phosphoshikimate 1-carboxyvinyltransferase, chloroplastic, found in Arabidopsis thaliana (Mouse-ear cress).